A 247-amino-acid polypeptide reads, in one-letter code: OCIA domain-containing protein 1 (247 aa).

Positions 1–112 constitute an OCIA domain; sequence MNGRADFREP…KKLENSPLGE (112 aa). Ser108 and Ser116 each carry phosphoserine. The interval 116 to 247 is disordered; it reads SGELRRSLPP…VNKYGDTWDE (132 aa). 2 stretches are compositionally biased toward polar residues: residues 136 to 146 and 168 to 177; these read SNVSGQSSFGT and ASMNESTPTG. Basic and acidic residues-rich tracts occupy residues 192 to 210 and 218 to 240; these read DSPK…KNRE and HKTD…KVNK. Phosphoserine is present on residues Ser193 and Ser198.

It belongs to the OCIAD1 family. Interacts with OCIAD2. Interacts with STAT3.

It is found in the endosome. Its function is as follows. Maintains stem cell potency. Increases STAT3 phosphorylation and controls ERK phosphorylation. May act as a scaffold, increasing STAT3 recruitment onto endosomes. This is OCIA domain-containing protein 1 from Rattus norvegicus (Rat).